Consider the following 233-residue polypeptide: Ribosomal RNA large subunit methyltransferase E (233 aa).

5 residues coordinate S-adenosyl-L-methionine: Gly80, Trp82, Asp108, Asp124, and Asp148. Lys188 functions as the Proton acceptor in the catalytic mechanism.

This sequence belongs to the class I-like SAM-binding methyltransferase superfamily. RNA methyltransferase RlmE family.

Its subcellular location is the cytoplasm. It carries out the reaction uridine(2552) in 23S rRNA + S-adenosyl-L-methionine = 2'-O-methyluridine(2552) in 23S rRNA + S-adenosyl-L-homocysteine + H(+). In terms of biological role, specifically methylates the uridine in position 2552 of 23S rRNA at the 2'-O position of the ribose in the fully assembled 50S ribosomal subunit. The protein is Ribosomal RNA large subunit methyltransferase E of Ruegeria pomeroyi (strain ATCC 700808 / DSM 15171 / DSS-3) (Silicibacter pomeroyi).